The sequence spans 65 residues: Metallothionein (65 aa).

Belongs to the metallothionein superfamily. Type 4 family.

In terms of biological role, metallothioneins have a high content of cysteine residues that bind various heavy metals. The sequence is that of Metallothionein from Paracentrotus lividus (Common sea urchin).